The primary structure comprises 293 residues: Dioxygenase cdmA (293 aa).

H135, D137, and H212 together coordinate Fe cation.

The protein belongs to the PhyH family. Homodimer. Requires Fe cation as cofactor.

The enzyme catalyses chrodrimanin C + 2-oxoglutarate + O2 = verruculide A + succinate + CO2 + H2O. It carries out the reaction chrodrimanin H + 2-oxoglutarate + O2 = chrodrimanin E + succinate + CO2 + H2O. It functions in the pathway secondary metabolite biosynthesis; terpenoid biosynthesis. Its function is as follows. Dioxygenase; part of the gene cluster that mediates the biosynthesis of chrodrimanin B, a meroterpenoid that acts as a potent blocker of insect GABA-gated chloride channels. The first step of the pathway is the biosynthesis of 6-hydroxymellein by the polyketide synthase cdmE. The prenyltransferase cdmH acts as a 6-hydroxymellein 5-farnesyltransferase and produces the hydrophobic metabolite verruculide C. The FAD-dependent monooxygenase cdmI further converts verruculide C into verruculide B. The terpene cyclase cdmG then produced the pentacyclic molecule 3-hydroxypentacecilide A, the backbone structure of chrodrimanin B, via folding the farnesyl moiety of the substrate into the chair-boat conformation. The short-chain dehydrogenase/reductase cdmF functions as the 3-OH dehydrogenase that oxidizes the C-3 hydroxyl group of 3-hydroxypentacecilide A and produces chrodrimanin C, the dehydrogenated product of 3-hydroxypentacecilide A. The cytochrome P450 monooxygenase cdmJ then accepts both 3-hydroxypentacecilide A and chrodrimanin C and functions as a C-7-beta-hydroxylase to produce respectively chrodrimanin H and chrodrimanin F. The dioxygenase cdmA accepts chrodrimanin H to afford chrodrimanin E, which is further transformed to chrodrimanin A by the dioxygenase cdmD. CdmA can also accept chrodrimanin C as substrate to convert it into verruculide A, which is further converted into chrodrimanin T by cdmD. The last step of the biosynthesis is proposed to be performed by the acetyltransferase cdmC which acetylates chrodrimanin A to yield chrodrimanin B. The pathway may also lead to the production of additional shunt products, including chrodrimanins T and U. This chain is Dioxygenase cdmA, found in Talaromyces verruculosus (Penicillium verruculosum).